The following is a 233-amino-acid chain: 5'-methylthioadenosine/S-adenosylhomocysteine nucleosidase (233 aa).

The active-site Proton acceptor is the glutamate 12. Substrate-binding positions include glycine 78, isoleucine 156, and 177-178 (ME). Residue aspartate 201 is the Proton donor of the active site.

Belongs to the PNP/UDP phosphorylase family. MtnN subfamily.

It catalyses the reaction S-adenosyl-L-homocysteine + H2O = S-(5-deoxy-D-ribos-5-yl)-L-homocysteine + adenine. It carries out the reaction S-methyl-5'-thioadenosine + H2O = 5-(methylsulfanyl)-D-ribose + adenine. The catalysed reaction is 5'-deoxyadenosine + H2O = 5-deoxy-D-ribose + adenine. Its pathway is amino-acid biosynthesis; L-methionine biosynthesis via salvage pathway; S-methyl-5-thio-alpha-D-ribose 1-phosphate from S-methyl-5'-thioadenosine (hydrolase route): step 1/2. Catalyzes the irreversible cleavage of the glycosidic bond in both 5'-methylthioadenosine (MTA) and S-adenosylhomocysteine (SAH/AdoHcy) to adenine and the corresponding thioribose, 5'-methylthioribose and S-ribosylhomocysteine, respectively. Also cleaves 5'-deoxyadenosine, a toxic by-product of radical S-adenosylmethionine (SAM) enzymes, into 5-deoxyribose and adenine. The chain is 5'-methylthioadenosine/S-adenosylhomocysteine nucleosidase from Listeria welshimeri serovar 6b (strain ATCC 35897 / DSM 20650 / CCUG 15529 / CIP 8149 / NCTC 11857 / SLCC 5334 / V8).